A 264-amino-acid chain; its full sequence is Indole-3-glycerol phosphate synthase (264 aa).

This sequence belongs to the TrpC family.

It carries out the reaction 1-(2-carboxyphenylamino)-1-deoxy-D-ribulose 5-phosphate + H(+) = (1S,2R)-1-C-(indol-3-yl)glycerol 3-phosphate + CO2 + H2O. Its pathway is amino-acid biosynthesis; L-tryptophan biosynthesis; L-tryptophan from chorismate: step 4/5. This Azoarcus sp. (strain BH72) protein is Indole-3-glycerol phosphate synthase.